The chain runs to 377 residues: Glutamate 5-kinase (377 aa).

Lys17 contributes to the ATP binding site. Substrate is bound by residues Ser56, Asp143, and Asn155. 217-223 (SGGMFSK) is an ATP binding site. The 79-residue stretch at 282–360 (AGDLVIDDGA…CEIESILGKC (79 aa)) folds into the PUA domain.

The protein belongs to the glutamate 5-kinase family.

It localises to the cytoplasm. It catalyses the reaction L-glutamate + ATP = L-glutamyl 5-phosphate + ADP. It functions in the pathway amino-acid biosynthesis; L-proline biosynthesis; L-glutamate 5-semialdehyde from L-glutamate: step 1/2. In terms of biological role, catalyzes the transfer of a phosphate group to glutamate to form L-glutamate 5-phosphate. The chain is Glutamate 5-kinase from Maridesulfovibrio salexigens (strain ATCC 14822 / DSM 2638 / NCIMB 8403 / VKM B-1763) (Desulfovibrio salexigens).